A 416-amino-acid polypeptide reads, in one-letter code: UV excision repair protein RAD23 homolog B (416 aa).

The Ubiquitin-like domain occupies 1-79 (MQVTLKTLQQ…VVVMVTKPKA (79 aa)). Low complexity predominate over residues 83–111 (AVPATTQPSSTPSPTAVSSSPAVAAAQAP). Positions 83–175 (AVPATTQPSS…STPGDSSRSN (93 aa)) are disordered. The segment covering 112–121 (APTPALPPTS) has biased composition (pro residues). The span at 122 to 143 (TPASTAPASTTASSEPAPAGAT) shows a compositional bias: low complexity. A Phosphothreonine modification is found at threonine 155. Phosphoserine is present on residues serine 160 and serine 174. Threonine 186 carries the phosphothreonine modification. Residues 188-228 (QSYENMVTEIMSMGYEREQVIAALRASFNNPDRAVEYLLMG) enclose the UBA 1 domain. Serine 199 is subject to Phosphoserine. Tyrosine 202 is modified (phosphotyrosine). In terms of domain architecture, STI1 spans 274 to 317 (HPLEFLRNQPQFQQMRQIIQQNPSLLPALLQQIGRENPQLLQQI). Residues 333 to 356 (QEAGSQGGGGGGGGGGGGGGGGGI) form a disordered region. A compositionally biased stretch (gly residues) spans 337–356 (SQGGGGGGGGGGGGGGGGGI). The 41-residue stretch at 371–411 (PQEKEAIERLKALGFPEGLVIQAYFACEKNENLAANFLLQQ) folds into the UBA 2 domain.

This sequence belongs to the RAD23 family. As to quaternary structure, component of the XPC complex composed of XPC, RAD23B and CETN2. Interacts with NGLY1 and PSMC1. Interacts with ATXN3. Interacts with AMFR. Interacts with VCP; the interaction is indirect and mediated by NGLY1.

The protein localises to the nucleus. It localises to the cytoplasm. Its function is as follows. Multiubiquitin chain receptor involved in modulation of proteasomal degradation. Binds to polyubiquitin chains. Proposed to be capable to bind simultaneously to the 26S proteasome and to polyubiquitinated substrates and to deliver ubiquitinated proteins to the proteasome. May play a role in endoplasmic reticulum-associated degradation (ERAD) of misfolded glycoproteins by association with PNGase and delivering deglycosylated proteins to the proteasome. In terms of biological role, involved in global genome nucleotide excision repair (GG-NER) by acting as component of the XPC complex. Cooperatively with Cetn2 appears to stabilize Xpc. May protect Xpc from proteasomal degradation. Functionally, the XPC complex is proposed to represent the first factor bound at the sites of DNA damage and together with other core recognition factors, Xpa, RPA and the TFIIH complex, is part of the pre-incision (or initial recognition) complex. The XPC complex recognizes a wide spectrum of damaged DNA characterized by distortions of the DNA helix such as single-stranded loops, mismatched bubbles or single-stranded overhangs. The orientation of XPC complex binding appears to be crucial for inducing a productive NER. XPC complex is proposed to recognize and to interact with unpaired bases on the undamaged DNA strand which is followed by recruitment of the TFIIH complex and subsequent scanning for lesions in the opposite strand in a 5'-to-3' direction by the NER machinery. Cyclobutane pyrimidine dimers (CPDs) which are formed upon UV-induced DNA damage esacpe detection by the XPC complex due to a low degree of structural perurbation. Instead they are detected by the UV-DDB complex which in turn recruits and cooperates with the XPC complex in the respective DNA repair. In vitro, the Xpc:Rad23b dimer is sufficient to initiate NER; it preferentially binds to cisplatin and UV-damaged double-stranded DNA and also binds to a variety of chemically and structurally diverse DNA adducts. Xpc:Rad23b contacts DNA both 5' and 3' of a cisplatin lesion with a preference for the 5' side. Xpc:Rad23bB induces a bend in DNA upon binding. Xpc:Rad23b stimulates the activity of DNA glycosylases Tdg and Smug1. This is UV excision repair protein RAD23 homolog B (Rad23b) from Mus musculus (Mouse).